Here is a 569-residue protein sequence, read N- to C-terminus: Lysine--tRNA ligase (569 aa).

Mg(2+) is bound by residues Glu414 and Glu421.

This sequence belongs to the class-II aminoacyl-tRNA synthetase family. Homodimer. Requires Mg(2+) as cofactor.

It localises to the cytoplasm. It carries out the reaction tRNA(Lys) + L-lysine + ATP = L-lysyl-tRNA(Lys) + AMP + diphosphate. This Christiangramia forsetii (strain DSM 17595 / CGMCC 1.15422 / KT0803) (Gramella forsetii) protein is Lysine--tRNA ligase.